Consider the following 301-residue polypeptide: Probable alpha-L-glutamate ligase 2 (301 aa).

In terms of domain architecture, ATP-grasp spans 104–287 (LQLLSRKGIG…VAEPIVEYIE (184 aa)). Residues Lys-141, 178–179 (EY), Asp-187, and 211–213 (RSN) contribute to the ATP site. Mg(2+)-binding residues include Asp-248, Glu-260, and Asn-262. Residues Asp-248, Glu-260, and Asn-262 each coordinate Mn(2+).

It belongs to the RimK family. The cofactor is Mg(2+). Mn(2+) is required as a cofactor.

The chain is Probable alpha-L-glutamate ligase 2 from Shewanella amazonensis (strain ATCC BAA-1098 / SB2B).